Reading from the N-terminus, the 433-residue chain is Glutamate-1-semialdehyde 2,1-aminomutase (433 aa).

An N6-(pyridoxal phosphate)lysine modification is found at K270.

The protein belongs to the class-III pyridoxal-phosphate-dependent aminotransferase family. HemL subfamily. Homodimer. The cofactor is pyridoxal 5'-phosphate.

The protein localises to the cytoplasm. The catalysed reaction is (S)-4-amino-5-oxopentanoate = 5-aminolevulinate. It participates in porphyrin-containing compound metabolism; protoporphyrin-IX biosynthesis; 5-aminolevulinate from L-glutamyl-tRNA(Glu): step 2/2. This chain is Glutamate-1-semialdehyde 2,1-aminomutase, found in Clostridium novyi (strain NT).